The sequence spans 506 residues: Probable cytochrome P450 309a1 (506 aa).

Residues Thr75, Thr78, and Thr81 each carry the phosphothreonine modification. Heme is bound at residue Cys452.

Belongs to the cytochrome P450 family. Heme serves as cofactor.

It is found in the endoplasmic reticulum membrane. The protein resides in the microsome membrane. In terms of biological role, may be involved in the metabolism of insect hormones and in the breakdown of synthetic insecticides. The sequence is that of Probable cytochrome P450 309a1 (Cyp309a1) from Drosophila melanogaster (Fruit fly).